The sequence spans 316 residues: Transaldolase (316 aa).

K132 functions as the Schiff-base intermediate with substrate in the catalytic mechanism.

It belongs to the transaldolase family. Type 1 subfamily.

Its subcellular location is the cytoplasm. The enzyme catalyses D-sedoheptulose 7-phosphate + D-glyceraldehyde 3-phosphate = D-erythrose 4-phosphate + beta-D-fructose 6-phosphate. It functions in the pathway carbohydrate degradation; pentose phosphate pathway; D-glyceraldehyde 3-phosphate and beta-D-fructose 6-phosphate from D-ribose 5-phosphate and D-xylulose 5-phosphate (non-oxidative stage): step 2/3. In terms of biological role, transaldolase is important for the balance of metabolites in the pentose-phosphate pathway. This is Transaldolase from Vibrio cholerae serotype O1 (strain ATCC 39315 / El Tor Inaba N16961).